Consider the following 319-residue polypeptide: Urease accessory protein UreD (319 aa).

The interval 284–319 (RLSTPQPPREWPLQEEGTFSNERFTKDHQSPSASPH) is disordered.

The protein belongs to the UreD family. In terms of assembly, ureD, UreF and UreG form a complex that acts as a GTP-hydrolysis-dependent molecular chaperone, activating the urease apoprotein by helping to assemble the nickel containing metallocenter of UreC. The UreE protein probably delivers the nickel.

Its subcellular location is the cytoplasm. Functionally, required for maturation of urease via the functional incorporation of the urease nickel metallocenter. This is Urease accessory protein UreD from Prochlorococcus marinus (strain MIT 9313).